Here is a 339-residue protein sequence, read N- to C-terminus: Extracellular matrix protein-binding protein emp (339 aa).

The N-terminal stretch at 1 to 26 (MKKKLFVLTMSTLFATQLINSNHANA) is a signal peptide.

It localises to the cell surface. Adhesin that binds to the host cell extracellular matrix proteins fibronectin, fibrinogen, collagen, and vitronectin. The protein is Extracellular matrix protein-binding protein emp (emp) of Staphylococcus aureus (strain bovine RF122 / ET3-1).